Reading from the N-terminus, the 405-residue chain is Acetate kinase (405 aa).

N7 contributes to the Mg(2+) binding site. K14 is a binding site for ATP. R90 contacts substrate. The active-site Proton donor/acceptor is the D147. Residues 207-211 (HLGNG), 282-284 (DMR), and 330-334 (GVGEN) contribute to the ATP site. Position 383 (E383) interacts with Mg(2+).

Belongs to the acetokinase family. As to quaternary structure, homodimer. The cofactor is Mg(2+). Mn(2+) serves as cofactor.

The protein localises to the cytoplasm. The catalysed reaction is acetate + ATP = acetyl phosphate + ADP. It functions in the pathway metabolic intermediate biosynthesis; acetyl-CoA biosynthesis; acetyl-CoA from acetate: step 1/2. Functionally, catalyzes the formation of acetyl phosphate from acetate and ATP. Can also catalyze the reverse reaction. The polypeptide is Acetate kinase (Pseudothermotoga lettingae (strain ATCC BAA-301 / DSM 14385 / NBRC 107922 / TMO) (Thermotoga lettingae)).